The sequence spans 443 residues: Threonine/serine transporter TdcC (443 aa).

11 consecutive transmembrane segments (helical) span residues 22–42, 44–64, 97–117, 140–160, 163–183, 207–227, 261–281, 311–331, 366–386, 389–409, and 423–443; these read TTWT…FFPI, AGFG…PIAF, GVVI…IYGV, FVAL…KDLM, VMSY…LSLI, ILIT…FSPI, MLMV…LSPA, FAIT…FKSF, ISMI…PNIL, IEAM…MYAI, and DNVF…YKLF.

The protein belongs to the amino acid/polyamine transporter 2 family. SdaC/TdcC subfamily.

The protein resides in the cell inner membrane. It carries out the reaction L-threonine(in) + H(+)(in) = L-threonine(out) + H(+)(out). It catalyses the reaction L-serine(in) + H(+)(in) = L-serine(out) + H(+)(out). Its function is as follows. Involved in the import of threonine and serine into the cell, with the concomitant import of a proton (symport system). This chain is Threonine/serine transporter TdcC, found in Shigella sonnei (strain Ss046).